The sequence spans 926 residues: Protein O-mannosyl-transferase Tmtc3 (926 aa).

Residues 1–26 (MSTNPNPGIHQYAPSTLPREREREGA) form a disordered region. At 1–36 (MSTNPNPGIHQYAPSTLPREREREGATNSPQRNLLE) the chain is on the cytoplasmic side. A helical membrane pass occupies residues 37–57 (FLCICVACIVCYYNSTQCGLV). Over 58-114 (FDDISAIRDNKDLRPHTPLINVFLNDFWGTPMRKEQSHKSYRPLTVLTFRFNYLLHA) the chain is Extracellular. Residues 115–135 (LEPFGYHLVNLLLHLSVCLLW) traverse the membrane as a helical segment. Topologically, residues 136 to 169 (RRVCRLLLRQCAASGSNAISAPSSSSVSQLNTCA) are cytoplasmic. Residues 170 to 190 (FVASLLFAVHPVHTEAVTGVV) traverse the membrane as a helical segment. The Extracellular segment spans residues 191–192 (GR). A helical transmembrane segment spans residues 193 to 213 (AELLSSICFLAAFLSYAKSVG). Residues 214–222 (DSGCPRRTN) are Cytoplasmic-facing. Helical transmembrane passes span 223-239 (WLTL…ASML) and 240-259 (CKEQ…LFVV). Over 260-303 (HQLRPLHLCHFVLRLFDERTEQQSPKLANPSGIRRWSSSTLWKR) the chain is Cytoplasmic. Residues 304 to 324 (LSFLVGITLTLLVGRVYVMGS) form a helical membrane-spanning segment. Over 325 to 345 (QLPIFTRFDNPASAADTPERQ) the chain is Extracellular. A helical membrane pass occupies residues 346-366 (LTYGYLIYLNCWLLLCPSLLC). Residues 367 to 384 (CDWTMGTVPLLQGFTDSR) lie on the Cytoplasmic side of the membrane. Residues 385–405 (NITTLLTFLALGAMVAKTCFT) traverse the membrane as a helical segment. The Extracellular segment spans residues 406 to 419 (RNLALSRTLIMCLG). The chain crosses the membrane as a helical span at residues 420-440 (WMVLPFLPASNLFFPVGFVVA). Topologically, residues 441-442 (ER) are cytoplasmic. The chain crosses the membrane as a helical span at residues 443–463 (ILYMPSMGYCLLVAYGFEQLQ). Over 464–926 (RRGSLSWQRF…RPTHKSRKRS (463 aa)) the chain is Extracellular. TPR repeat units follow at residues 514-547 (AKLY…QTDD), 548-581 (IGAH…FPQA), 596-630 (LNVF…RSDY), 631-664 (VQAY…DNEN), 665-698 (ADIY…YPEH), 736-769 (EKVY…KADF), 770-803 (RSAL…HPSH), 805-838 (KGLI…DPHN), and 839-872 (TQGL…APAE). Asn-609 and Asn-645 each carry an N-linked (GlcNAc...) asparagine glycan.

Belongs to the TMTC family.

It localises to the membrane. Its subcellular location is the endoplasmic reticulum. The enzyme catalyses a di-trans,poly-cis-dolichyl beta-D-mannosyl phosphate + L-seryl-[protein] = 3-O-(alpha-D-mannosyl)-L-seryl-[protein] + a di-trans,poly-cis-dolichyl phosphate + H(+). It carries out the reaction a di-trans,poly-cis-dolichyl beta-D-mannosyl phosphate + L-threonyl-[protein] = 3-O-(alpha-D-mannosyl)-L-threonyl-[protein] + a di-trans,poly-cis-dolichyl phosphate + H(+). The protein operates within protein modification; protein glycosylation. Transfers mannosyl residues to the hydroxyl group of serine or threonine residues. The sequence is that of Protein O-mannosyl-transferase Tmtc3 from Drosophila melanogaster (Fruit fly).